A 113-amino-acid chain; its full sequence is MNTLDFVDQSSLRDDVPAFGPGDTVNVHVKVIEGSKERIQVFKGVVIRRQGGGIRETFTVRKESYGVGVERTFPVHSPNIDHIDIVTRGDVRRAKLYYLRDLRGKKAKIKEKR.

Belongs to the bacterial ribosomal protein bL19 family.

This protein is located at the 30S-50S ribosomal subunit interface and may play a role in the structure and function of the aminoacyl-tRNA binding site. The polypeptide is Large ribosomal subunit protein bL19 (Mycolicibacterium gilvum (strain PYR-GCK) (Mycobacterium gilvum (strain PYR-GCK))).